Here is a 209-residue protein sequence, read N- to C-terminus: Uracil phosphoribosyltransferase (209 aa).

5-phospho-alpha-D-ribose 1-diphosphate contacts are provided by residues R79, R104, and D131–S139. Uracil-binding positions include I194 and G199 to A201. A 5-phospho-alpha-D-ribose 1-diphosphate-binding site is contributed by D200.

Belongs to the UPRTase family. Mg(2+) serves as cofactor.

It carries out the reaction UMP + diphosphate = 5-phospho-alpha-D-ribose 1-diphosphate + uracil. It participates in pyrimidine metabolism; UMP biosynthesis via salvage pathway; UMP from uracil: step 1/1. With respect to regulation, allosterically activated by GTP. Its function is as follows. Catalyzes the conversion of uracil and 5-phospho-alpha-D-ribose 1-diphosphate (PRPP) to UMP and diphosphate. The protein is Uracil phosphoribosyltransferase of Lysinibacillus sphaericus (strain C3-41).